A 256-amino-acid chain; its full sequence is Protein FixA (256 aa).

It belongs to the ETF beta-subunit/FixA family. Heterodimer of FixA and FixB.

It functions in the pathway amine and polyamine metabolism; carnitine metabolism. In terms of biological role, required for anaerobic carnitine reduction. May bring reductant to CaiA. This is Protein FixA from Salmonella agona (strain SL483).